A 246-amino-acid polypeptide reads, in one-letter code: Anionic trypsin-2 (246 aa).

Positions 1-15 (MSALLILALVGAAVA) are cleaved as a signal peptide. Positions 16–23 (FPVDDDDK) are cleaved as a propeptide — activation peptide. A Peptidase S1 domain is found at 24 to 244 (IVGGYTCRES…YVDWIQNTIA (221 aa)). Cystine bridges form between Cys30-Cys160, Cys48-Cys64, Cys132-Cys233, Cys139-Cys206, Cys171-Cys185, and Cys196-Cys220. His63 functions as the Charge relay system in the catalytic mechanism. Ca(2+) is bound by residues Glu75, Asn77, Val80, and Glu85. The active-site Charge relay system is the Asp107. Ser200 acts as the Charge relay system in catalysis.

Belongs to the peptidase S1 family. Requires Ca(2+) as cofactor. In terms of tissue distribution, expressed in the pancreas, lung and kidney.

It localises to the secreted. It is found in the extracellular space. The enzyme catalyses Preferential cleavage: Arg-|-Xaa, Lys-|-Xaa.. This chain is Anionic trypsin-2 (Prss2), found in Mus musculus (Mouse).